A 555-amino-acid polypeptide reads, in one-letter code: Protection of telomeres protein 1 (555 aa).

The protein belongs to the telombin family. Self-associates. Interacts with ccq1, poz1 and tpz1.

It localises to the nucleus. The protein localises to the chromosome. The protein resides in the telomere. In terms of biological role, single-stranded telomeric DNA-binding protein that is required to protect the 3'-end telomeric overhang. It binds the consensus sequence 5'-GGTTAC-3'. Regulates telomerase and telomere length. The chain is Protection of telomeres protein 1 (pot1) from Schizosaccharomyces pombe (strain 972 / ATCC 24843) (Fission yeast).